Reading from the N-terminus, the 78-residue chain is Exodeoxyribonuclease 7 small subunit (78 aa).

The protein belongs to the XseB family. As to quaternary structure, heterooligomer composed of large and small subunits.

The protein resides in the cytoplasm. It carries out the reaction Exonucleolytic cleavage in either 5'- to 3'- or 3'- to 5'-direction to yield nucleoside 5'-phosphates.. In terms of biological role, bidirectionally degrades single-stranded DNA into large acid-insoluble oligonucleotides, which are then degraded further into small acid-soluble oligonucleotides. In Oceanobacillus iheyensis (strain DSM 14371 / CIP 107618 / JCM 11309 / KCTC 3954 / HTE831), this protein is Exodeoxyribonuclease 7 small subunit.